The chain runs to 603 residues: Putative ankyrin repeat protein FPV162 (603 aa).

14 ANK repeats span residues 23–53, 57–87, 91–120, 124–155, 159–189, 193–223, 227–257, 261–291, 295–325, 329–362, 366–397, 401–428, 432–467, and 504–533; these read FKDT…DINV, FKKT…NVNV, FEST…DPNT, NGQT…NVNA, KHNT…DVKI, DGIT…DVNA, EGNT…EVNA, VGDT…NVNA, ISVT…EVNS, YGRT…DIEA, IGGT…DINT, RDET…STNI, SNIT…DIKN, and NNMY…DIYL.

The protein is Putative ankyrin repeat protein FPV162 of Vertebrata (FPV).